Consider the following 161-residue polypeptide: Peptidyl-prolyl cis-trans isomerase 10 (161 aa).

Positions 1–153 constitute a PPIase cyclophilin-type domain; that stretch reads MSVTLHTTSG…VQQKIQNVTI (153 aa).

This sequence belongs to the cyclophilin-type PPIase family. PPIL3 subfamily.

The enzyme catalyses [protein]-peptidylproline (omega=180) = [protein]-peptidylproline (omega=0). Functionally, PPIases accelerate the folding of proteins. It catalyzes the cis-trans isomerization of proline imidic peptide bonds in oligopeptides. This chain is Peptidyl-prolyl cis-trans isomerase 10 (cyn-10), found in Caenorhabditis elegans.